The following is an 84-amino-acid chain: MKGMILFISCILLIGIVVECKEGYLMDHEGCKLSCFIRPSGYCGRECAIKKGSSGYCAWPACYCYGLPNWVKVWERATNRCGKK.

An N-terminal signal peptide occupies residues 1–20; the sequence is MKGMILFISCILLIGIVVEC. An LCN-type CS-alpha/beta domain is found at 21 to 82; it reads KEGYLMDHEG…VWERATNRCG (62 aa). 4 disulfide bridges follow: cysteine 31–cysteine 81, cysteine 35–cysteine 57, cysteine 43–cysteine 62, and cysteine 47–cysteine 64. Position 81 is a cysteine amide (cysteine 81).

The protein belongs to the long (4 C-C) scorpion toxin superfamily. Sodium channel inhibitor family. Beta subfamily. As to expression, expressed by the venom gland.

It is found in the secreted. Its function is as follows. Beta toxins modify sodium channel function in two ways: an excitatory effect (shifting the activation process to more negative potential) and/or a depressant effect (reducing the peak current). At concentration of 500 nM this toxin produces channel opening at more negative potentials in hNav1.2/SCN2A and hNav1.3/SCN3A, which shows the biggest effect. On the other hand the peak current is decreased in hNav1.4/SCN4A and hNav1.5/SCN5A channels, without apparent modification of the activation gate. This toxin is active against mammals. This chain is Beta-mammal Tt1g, found in Tityus trivittatus (Argentinean scorpion).